The sequence spans 230 residues: Demethylmenaquinone methyltransferase (230 aa).

Residues Thr-62, Asp-80, 100-101 (DG), and Ser-117 contribute to the S-adenosyl-L-methionine site.

It belongs to the class I-like SAM-binding methyltransferase superfamily. MenG/UbiE family.

The enzyme catalyses a 2-demethylmenaquinol + S-adenosyl-L-methionine = a menaquinol + S-adenosyl-L-homocysteine + H(+). It functions in the pathway quinol/quinone metabolism; menaquinone biosynthesis; menaquinol from 1,4-dihydroxy-2-naphthoate: step 2/2. Its function is as follows. Methyltransferase required for the conversion of demethylmenaquinol (DMKH2) to menaquinol (MKH2). This is Demethylmenaquinone methyltransferase from Corynebacterium glutamicum (strain ATCC 13032 / DSM 20300 / JCM 1318 / BCRC 11384 / CCUG 27702 / LMG 3730 / NBRC 12168 / NCIMB 10025 / NRRL B-2784 / 534).